Here is a 124-residue protein sequence, read N- to C-terminus: Non-structural protein 2 (124 aa).

The DLNP; interaction with MAP1B signature appears at 121 to 124 (DLNP).

It belongs to the pneumovirus non-structural protein 2 family. Monomer (instable). Homomultimer. Heteromultimer with NS1. Interacts with host RIGI (via N-terminus); this interaction prevents host signaling pathway involved in interferon production. Interacts with host MAP1B/microtubule-associated protein 1B.

It localises to the host mitochondrion. Functionally, plays a major role in antagonizing the type I IFN-mediated antiviral response. Acts cooperatively with NS1 to repress activation and nuclear translocation of host IFN-regulatory factor IRF3. Interacts with the host cytoplasmic sensor of viral nucleic acids RIGI and prevents the interaction with its downstream partner MAVS. Together with NS2, participates in the proteasomal degradation of host STAT2, IRF3, IRF7, TBK1 and RIGI through a NS-degradasome involving CUL2 and Elongin-C. The degradasome requires an intact mitochondrial MAVS. Induces host SOCS1 expression. Induces activation of NF-kappa-B. Suppresses premature apoptosis by an NF-kappa-B-dependent, interferon-independent mechanism promoting continued viral replication. This is Non-structural protein 2 (1B) from Human respiratory syncytial virus B (strain 18537).